The chain runs to 321 residues: Methionyl-tRNA formyltransferase (321 aa).

Serine 113–proline 116 serves as a coordination point for (6S)-5,6,7,8-tetrahydrofolate.

The protein belongs to the Fmt family.

The catalysed reaction is L-methionyl-tRNA(fMet) + (6R)-10-formyltetrahydrofolate = N-formyl-L-methionyl-tRNA(fMet) + (6S)-5,6,7,8-tetrahydrofolate + H(+). Functionally, attaches a formyl group to the free amino group of methionyl-tRNA(fMet). The formyl group appears to play a dual role in the initiator identity of N-formylmethionyl-tRNA by promoting its recognition by IF2 and preventing the misappropriation of this tRNA by the elongation apparatus. The chain is Methionyl-tRNA formyltransferase from Vibrio atlanticus (strain LGP32) (Vibrio splendidus (strain Mel32)).